Consider the following 198-residue polypeptide: Large ribosomal subunit protein bL25 (198 aa).

The protein belongs to the bacterial ribosomal protein bL25 family. CTC subfamily. In terms of assembly, part of the 50S ribosomal subunit; part of the 5S rRNA/L5/L18/L25 subcomplex. Contacts the 5S rRNA. Binds to the 5S rRNA independently of L5 and L18.

Functionally, this is one of the proteins that binds to the 5S RNA in the ribosome where it forms part of the central protuberance. The chain is Large ribosomal subunit protein bL25 from Chlorobium phaeobacteroides (strain DSM 266 / SMG 266 / 2430).